Here is a 178-residue protein sequence, read N- to C-terminus: Large ribosomal subunit protein uL6 (178 aa).

The protein belongs to the universal ribosomal protein uL6 family. Part of the 50S ribosomal subunit.

In terms of biological role, this protein binds to the 23S rRNA, and is important in its secondary structure. It is located near the subunit interface in the base of the L7/L12 stalk, and near the tRNA binding site of the peptidyltransferase center. The sequence is that of Large ribosomal subunit protein uL6 from Francisella tularensis subsp. tularensis (strain FSC 198).